Here is a 115-residue protein sequence, read N- to C-terminus: DNA-binding protein PH1060 (115 aa).

It belongs to the PDCD5 family.

This is DNA-binding protein PH1060 from Pyrococcus horikoshii (strain ATCC 700860 / DSM 12428 / JCM 9974 / NBRC 100139 / OT-3).